The chain runs to 160 residues: Troponin C, skeletal muscle (160 aa).

EF-hand domains are found at residues 15–50, 51–86, 91–126, and 127–160; these read EMIA…LGQN, PTRE…QLKE, KSEE…SGEP, and VSEE…ENIQ. The Ca(2+) site is built by aspartate 28, aspartate 30, aspartate 34, glutamate 39, aspartate 64, aspartate 66, serine 68, threonine 70, glutamate 75, aspartate 104, asparagine 106, aspartate 108, glutamate 115, aspartate 140, asparagine 142, aspartate 144, lysine 146, and glutamate 151.

The protein belongs to the troponin C family.

Troponin is the central regulatory protein of striated muscle contraction. Tn consists of three components: Tn-I which is the inhibitor of actomyosin ATPase, Tn-T which contains the binding EF-hand for tropomyosin and Tn-C. The binding of calcium to Tn-C abolishes the inhibitory action of Tn on actin filaments. In Anguilla anguilla (European freshwater eel), this protein is Troponin C, skeletal muscle.